We begin with the raw amino-acid sequence, 298 residues long: Mitochondrial 2-oxodicarboxylate carrier (298 aa).

3 Solcar repeats span residues 10–99 (HETS…YKKF), 106–195 (SPGL…VKNI), and 204–293 (LEFL…TYAW). 6 helical membrane passes run 16-36 (VAAGGSAGLVEICLMHPLDVV), 69-88 (FGFYKGIIPPILAETPKRAV), 112-132 (LIAGLGSGLTEAVVVNPFEVV), 166-186 (GLNKGLTATLGRHGIFNMVYF), 204-224 (LEFLRKFGIGFVSGTMGSVFN), and 276-296 (LGPGGGVMLLVYEYTYAWLQE).

Belongs to the mitochondrial carrier (TC 2.A.29) family.

Its subcellular location is the mitochondrion inner membrane. It carries out the reaction 2-oxoadipate(in) + 2-oxoglutarate(out) = 2-oxoadipate(out) + 2-oxoglutarate(in). It catalyses the reaction hexanedioate(in) + 2-oxoglutarate(out) = hexanedioate(out) + 2-oxoglutarate(in). The catalysed reaction is L-2-aminoadipate(in) + 2-oxoglutarate(out) = L-2-aminoadipate(out) + 2-oxoglutarate(in). The enzyme catalyses glutarate(in) + 2-oxoglutarate(out) = glutarate(out) + 2-oxoglutarate(in). It carries out the reaction 2-oxoheptanedioate(in) + 2-oxoglutarate(out) = 2-oxoheptanedioate(out) + 2-oxoglutarate(in). It catalyses the reaction heptanedioate(in) + 2-oxoglutarate(out) = heptanedioate(out) + 2-oxoglutarate(in). The catalysed reaction is citrate(in) + 2-oxoglutarate(out) = citrate(out) + 2-oxoglutarate(in). Its function is as follows. Transports dicarboxylates across the inner membranes of mitochondria by a counter-exchange mechanism. Can transport 2-oxoadipate (2-oxohexanedioate), 2-oxoglutarate, adipate (hexanedioate), glutarate, and to a lesser extent, pimelate (heptanedioate), 2-oxopimelate (2-oxoheptanedioate), 2-aminoadipate (2-aminohexanedioate), oxaloacetate, and citrate. Plays a central role in catabolism of lysine, hydroxylysine, and tryptophan, by transporting common metabolite intermediates (such as 2-oxoadipate) into the mitochondria, where it is converted into acetyl-CoA and can enter the citric acid (TCA) cycle. This Mus musculus (Mouse) protein is Mitochondrial 2-oxodicarboxylate carrier (Slc25a21).